Consider the following 1314-residue polypeptide: Enfumafungin synthase efuA (1314 aa).

Residues 1-680 form a terpenne cyclase region; that stretch reads MPSYHNTDKT…RYIDKASRQG (680 aa). 2 PFTB repeats span residues 19–62 and 66–107; these read LQQA…ELSL and GPEI…RILG. The next 3 helical transmembrane spans lie at 133–153, 155–175, and 230–250; these read FFTRFFLATFGLVPWTAIPQM, AELILLPTFMFLNIYVLSSWA, and YQWIEFAFTLLDHILALFGGL. A PFTB 3 repeat occupies 260–300; the sequence is LKRCTAWLLEHQEESGDWAGFFPPIHGSIWALLLDGFSFQS. The Proton donor role is filled by Asp-395. PFTB repeat units lie at residues 417-458 and 546-597; these read VMNG…DSLV and CMRT…LRFR. A glycosyltransferase region spans residues 681–1314; the sequence is IETLRIPSSS…ADSVLDIEEK (634 aa). The chain crosses the membrane as a helical span at residues 1200–1220; sequence AIVQLLYGFTTTILALFGWLK. The tract at residues 1289 to 1314 is disordered; sequence DSGASESSRSSLDGGHADSVLDIEEK. The span at 1292–1302 shows a compositional bias: low complexity; sequence ASESSRSSLDG.

In the N-terminal section; belongs to the terpene cyclase/mutase family. The protein in the C-terminal section; belongs to the glycosyltransferase 28 family.

The protein resides in the membrane. It functions in the pathway secondary metabolite biosynthesis; terpenoid biosynthesis. In terms of biological role, terpene cyclase-glycosyl transferase fusion protein; part of the gene cluster that mediates the biosynthesis of enfumafungin, a glycosylated fernene-type triterpenoid with potent antifungal activity, mediated by its interaction with beta-1,3-glucan synthase and the fungal cell wall. The pathway begins with the terpene cyclase-glycosyl transferase fusion protein that most likely uses 2,3-oxidosqualene as substrate and catalyzes glycosylation immediately after cyclization. The fernene glycoside then could be processed by the desaturase efuI which catalyzes isomerization of a double bond established by efuA to form the core structure. The latter would then undergo a series of hydroxylations in unknown order at C-2, C-19, C-23 and C-25, which would be catalyzed by two of the three cytochrome P450 monooxygenases efuB, efuG or efuH. The hydroxy-group at C-25 becomes oxidized by the dehydrogenase efuE to enable a spontaneous, non-enzymatic hemiacetal formation with C-23. After hydroxylation at C-2, acetylation by the acetyltransferase efuC takes place. The final steps in enfumafungin biosynthesis require expansion of the 5-membered ring by lactonization via a Baeyer-Villiger reaction mediated by one of the BGC's cytochrome P450 monooxygenases (efuB, efuG or efuH) followed by ring cleavage. This type of reaction would establish a double bond between C-20 and C-21 which could be reduced by the reductase efuL to form the final product. The protein is Enfumafungin synthase efuA of Hormonema carpetanum.